The primary structure comprises 543 residues: Chaperonin GroEL 1 (543 aa).

ATP-binding positions include 30-33 (TLGP), K51, 87-91 (DGTTT), G415, and D496.

It belongs to the chaperonin (HSP60) family. In terms of assembly, forms a cylinder of 14 subunits composed of two heptameric rings stacked back-to-back. Interacts with the co-chaperonin GroES.

It is found in the cytoplasm. It carries out the reaction ATP + H2O + a folded polypeptide = ADP + phosphate + an unfolded polypeptide.. Together with its co-chaperonin GroES, plays an essential role in assisting protein folding. The GroEL-GroES system forms a nano-cage that allows encapsulation of the non-native substrate proteins and provides a physical environment optimized to promote and accelerate protein folding. The polypeptide is Chaperonin GroEL 1 (Mesorhizobium japonicum (strain LMG 29417 / CECT 9101 / MAFF 303099) (Mesorhizobium loti (strain MAFF 303099))).